Here is a 557-residue protein sequence, read N- to C-terminus: Suprabasin (557 aa).

The signal sequence occupies residues 1–23 (MHLASLLSSCSLLLLLGALPGWA). Disordered stretches follow at residues 150–175 (RFGQ…GAHH), 422–441 (GQGA…KVAQ), 464–490 (AAGQ…GKQE), and 509–533 (NQLL…TTLT). Low complexity predominate over residues 153 to 175 (QGAHHATGQAGKEAEKFGQGAHH). Low complexity predominate over residues 476 to 487 (GQGVHHAAGQAG).

The protein resides in the secreted. The chain is Suprabasin (SBSN) from Bos taurus (Bovine).